The primary structure comprises 324 residues: Beta-ketoacyl-[acyl-carrier-protein] synthase III (324 aa).

Catalysis depends on residues cysteine 112 and histidine 249. The tract at residues 250 to 254 (QANRR) is ACP-binding. Asparagine 279 is a catalytic residue.

This sequence belongs to the thiolase-like superfamily. FabH family. As to quaternary structure, homodimer.

The protein localises to the cytoplasm. It catalyses the reaction malonyl-[ACP] + acetyl-CoA + H(+) = 3-oxobutanoyl-[ACP] + CO2 + CoA. Its pathway is lipid metabolism; fatty acid biosynthesis. Functionally, catalyzes the condensation reaction of fatty acid synthesis by the addition to an acyl acceptor of two carbons from malonyl-ACP. Catalyzes the first condensation reaction which initiates fatty acid synthesis and may therefore play a role in governing the total rate of fatty acid production. Possesses both acetoacetyl-ACP synthase and acetyl transacylase activities. Its substrate specificity determines the biosynthesis of branched-chain and/or straight-chain of fatty acids. In Streptococcus pyogenes serotype M3 (strain ATCC BAA-595 / MGAS315), this protein is Beta-ketoacyl-[acyl-carrier-protein] synthase III.